Reading from the N-terminus, the 196-residue chain is ATP-dependent Clp protease proteolytic subunit (196 aa).

The active-site Nucleophile is the serine 96. Residue histidine 121 is part of the active site.

Belongs to the peptidase S14 family. In terms of assembly, fourteen ClpP subunits assemble into 2 heptameric rings which stack back to back to give a disk-like structure with a central cavity, resembling the structure of eukaryotic proteasomes.

The protein resides in the cytoplasm. It carries out the reaction Hydrolysis of proteins to small peptides in the presence of ATP and magnesium. alpha-casein is the usual test substrate. In the absence of ATP, only oligopeptides shorter than five residues are hydrolyzed (such as succinyl-Leu-Tyr-|-NHMec, and Leu-Tyr-Leu-|-Tyr-Trp, in which cleavage of the -Tyr-|-Leu- and -Tyr-|-Trp bonds also occurs).. In terms of biological role, cleaves peptides in various proteins in a process that requires ATP hydrolysis. Has a chymotrypsin-like activity. Plays a major role in the degradation of misfolded proteins. This Streptococcus suis (strain 98HAH33) protein is ATP-dependent Clp protease proteolytic subunit.